The following is a 148-amino-acid chain: MAPKGEKKPAEKKPAEEKKSTVAEKAPAEKKPKAGKKLPKEGGSAAGEKKKKRSKKSVETYKIYIFKVLKQVHPDIGISSKAMGIMNSFINDIFEKLAQESSRLARYNKKPTITSREIQTAVRLVLPGELAKHAVSEGTKAVTKFTSS.

Basic and acidic residues predominate over residues 1 to 32 (MAPKGEKKPAEKKPAEEKKSTVAEKAPAEKKP). Residues 1–57 (MAPKGEKKPAEKKPAEEKKSTVAEKAPAEKKPKAGKKLPKEGGSAAGEKKKKRSKKS) form a disordered region. N6-acetyllysine occurs at positions 7, 36, and 37. A Glycyl lysine isopeptide (Lys-Gly) (interchain with G-Cter in ubiquitin) cross-link involves residue Lys144.

Belongs to the histone H2B family. The nucleosome is a histone octamer containing two molecules each of H2A, H2B, H3 and H4 assembled in one H3-H4 heterotetramer and two H2A-H2B heterodimers. The octamer wraps approximately 147 bp of DNA. Can be acetylated to form H2BK6ac, H2BK33ac and H2BK34ac. Post-translationally, monoubiquitinated to form H2BK143ub1; may give a specific tag for epigenetic transcriptional activation.

It is found in the nucleus. The protein localises to the chromosome. Core component of nucleosome. Nucleosomes wrap and compact DNA into chromatin, limiting DNA accessibility to the cellular machineries which require DNA as a template. Histones thereby play a central role in transcription regulation, DNA repair, DNA replication and chromosomal stability. DNA accessibility is regulated via a complex set of post-translational modifications of histones, also called histone code, and nucleosome remodeling. The sequence is that of Probable histone H2B.1 from Medicago truncatula (Barrel medic).